The chain runs to 395 residues: Cytoplasmic 60S subunit biogenesis factor REI1 homolog 2 (395 aa).

4 consecutive C2H2-type zinc fingers follow at residues 4 to 28 (LACN…SEWH), 68 to 92 (YSCG…SKSH), 171 to 194 (ACCL…HKFH), and 222 to 249 (FVCL…AKGH).

Belongs to the REI1 family. As to quaternary structure, can form homodimer. Interacts with RLP24, RLP24A, RPL24B, EBP1 and JJJ1.

It is found in the cytoplasm. In terms of biological role, pre-60S-associated factor involved in the cytoplasmic maturation of the 60S subunit. Involved in the dissociation and recycling of other late pre-60S factors before newly synthesized large ribosomal subunits enter translation. Can complement the growth defect of a yeast mutant lacking REI1. Required for leaf growth under cold temperature conditions. The polypeptide is Cytoplasmic 60S subunit biogenesis factor REI1 homolog 2 (Arabidopsis thaliana (Mouse-ear cress)).